The chain runs to 124 residues: UPF0102 protein MSMEG_2508/MSMEI_2448 (124 aa).

This sequence belongs to the UPF0102 family.

This is UPF0102 protein MSMEG_2508/MSMEI_2448 from Mycolicibacterium smegmatis (strain ATCC 700084 / mc(2)155) (Mycobacterium smegmatis).